Here is a 905-residue protein sequence, read N- to C-terminus: Core protein VP3 (905 aa).

It belongs to the orbivirus VP3 family.

The protein localises to the virion. The VP3 protein is one of the five proteins (with VP1, VP4, VP6 and VP7) which form the inner capsid of the virus. This is Core protein VP3 (Segment-3) from African horse sickness virus (AHSV).